The following is a 422-amino-acid chain: 5'-deoxyadenosine deaminase (422 aa).

2 residues coordinate Zn(2+): His57 and His59. Substrate-binding residues include Glu86 and His178. His205 contacts Zn(2+). Substrate contacts are provided by Glu208 and Asp294. A Zn(2+)-binding site is contributed by Asp294.

It belongs to the metallo-dependent hydrolases superfamily. MTA/SAH deaminase family. In terms of assembly, homotetramer. Zn(2+) serves as cofactor.

It carries out the reaction 5'-deoxyadenosine + H2O + H(+) = 5'-deoxyinosine + NH4(+). It catalyses the reaction S-adenosyl-L-homocysteine + H2O + H(+) = S-inosyl-L-homocysteine + NH4(+). The enzyme catalyses S-methyl-5'-thioadenosine + H2O + H(+) = S-methyl-5'-thioinosine + NH4(+). The catalysed reaction is adenosine + H2O + H(+) = inosine + NH4(+). It participates in amino-acid biosynthesis; S-adenosyl-L-methionine biosynthesis. Functionally, catalyzes the deamination of three SAM-derived enzymatic products, namely 5'-deoxyadenosine, S-adenosyl-L-homocysteine, and 5'-methylthioadenosine, to produce the inosine analogs. Can also deaminate adenosine. The preferred substrate for this enzyme is 5'-deoxyadenosine, but all these substrates are efficiently deaminated. Likely functions in a S-adenosyl-L-methionine (SAM) recycling pathway from S-adenosyl-L-homocysteine (SAH) produced from SAM-dependent methylation reactions. May also be involved in the recycling of 5'-deoxyadenosine, whereupon the 5'-deoxyribose moiety of 5'-deoxyinosine is further metabolized to deoxyhexoses used for the biosynthesis of aromatic amino acids in methanogens. The protein is 5'-deoxyadenosine deaminase of Methanococcus maripaludis (strain C6 / ATCC BAA-1332).